Here is a 923-residue protein sequence, read N- to C-terminus: Lysosomal acid alpha-glucosidase (923 aa).

The signal sequence occupies residues 1–17 (MKHQVLLPLLVTTAIIA). The propeptide occupies 18–36 (GSVGVYTHSKPLLGQSQDQ). Residues Asn-65, Asn-405, and Asn-440 are each glycosylated (N-linked (GlcNAc...) asparagine). Catalysis depends on Asp-455, which acts as the Nucleophile. Glu-458 is an active-site residue. Residue Asp-585 is the Proton donor of the active site. Residues Asn-586, Asn-621, Asn-646, Asn-848, Asn-908, and Asn-912 are each glycosylated (N-linked (GlcNAc...) asparagine).

Belongs to the glycosyl hydrolase 31 family.

It is found in the lysosome. The protein resides in the secreted. It catalyses the reaction Hydrolysis of terminal, non-reducing (1-&gt;4)-linked alpha-D-glucose residues with release of alpha-D-glucose.. Its function is as follows. Essential for the degradation of glycogen to glucose in lysosomes. Has both alpha-1,4 and alpha-1,6-glucosidase activity. This is Lysosomal acid alpha-glucosidase from Tetrahymena pyriformis.